The chain runs to 184 residues: ADP-ribosylation factor 6 (184 aa).

Glycine 2 is lipidated: N-myristoyl glycine. Residues 28 to 35, 71 to 75, and 130 to 133 contribute to the GTP site; these read GLDAAGKT, DVGGQ, and NKQD.

This sequence belongs to the small GTPase superfamily. Arf family.

It is found in the cell membrane. Its function is as follows. GTP-binding protein that functions as a molecular switch for the activation of 'new end take off' (NETO), a process in which the directions of cell growth change from a monopolar manner to a bipolar manner in fission yeast. Involved in supplying membrane to the growing new end. The polypeptide is ADP-ribosylation factor 6 (arf6) (Schizosaccharomyces pombe (strain 972 / ATCC 24843) (Fission yeast)).